A 349-amino-acid polypeptide reads, in one-letter code: tRNA uridine(34) hydroxylase (349 aa).

Positions 146–240 (DDPDAVFIDM…YARKAREQGL (95 aa)) constitute a Rhodanese domain. Cys-200 functions as the Cysteine persulfide intermediate in the catalytic mechanism. Residues 314 to 328 (PEEEQRRRRAGRENG) are compositionally biased toward basic and acidic residues. Residues 314–349 (PEEEQRRRRAGRENGNKIFNKSRGRLNTTLGIPDPE) form a disordered region.

It belongs to the TrhO family.

It catalyses the reaction uridine(34) in tRNA + AH2 + O2 = 5-hydroxyuridine(34) in tRNA + A + H2O. Its function is as follows. Catalyzes oxygen-dependent 5-hydroxyuridine (ho5U) modification at position 34 in tRNAs. In Cronobacter sakazakii (strain ATCC BAA-894) (Enterobacter sakazakii), this protein is tRNA uridine(34) hydroxylase.